A 1500-amino-acid polypeptide reads, in one-letter code: Alpha-1-macroglobulin (1500 aa).

Residues 1–24 (MRRNQLPIPVFLLLLLLLPRDATA) form the signal peptide. Cysteines 48 and 86 form a disulfide. N-linked (GlcNAc...) asparagine glycans are attached at residues asparagine 55, asparagine 61, and asparagine 157. Disulfide bonds link cysteine 249–cysteine 298 and cysteine 267–cysteine 286. N-linked (GlcNAc...) asparagine glycans are attached at residues asparagine 382 and asparagine 412. A disulfide bridge connects residues cysteine 469 and cysteine 562. N-linked (GlcNAc...) asparagine glycosylation is present at asparagine 568. 6 cysteine pairs are disulfide-bonded: cysteine 594–cysteine 785, cysteine 642–cysteine 689, cysteine 835–cysteine 863, cysteine 861–cysteine 897, cysteine 935–cysteine 1344, and cysteine 1094–cysteine 1142. A bait region region spans residues 686 to 746 (PRYCPMYQAY…QEVEVRETVR (61 aa)). Asparagine 883 and asparagine 944 each carry an N-linked (GlcNAc...) asparagine glycan. The segment at residues 986–989 (CGEQ) is a cross-link (isoglutamyl cysteine thioester (Cys-Gln)). Asparagine 1005 carries an N-linked (GlcNAc...) asparagine glycan. The tract at residues 1360–1500 (EGEAPFTLKV…FSSDSEQGNA (141 aa)) is receptor-binding domain. N-linked (GlcNAc...) asparagine glycans are attached at residues asparagine 1390 and asparagine 1448.

Belongs to the protease inhibitor I39 (alpha-2-macroglobulin) family. Homotetramer; disulfide-linked. In terms of tissue distribution, widely expressed. Highest level in ovary, testis, uterus and prostate. Protein found in plasma.

The protein resides in the secreted. Is able to inhibit all four classes of proteinases by a unique 'trapping' mechanism. This protein has a peptide stretch, called the 'bait region' which contains specific cleavage sites for different proteinases. When a proteinase cleaves the bait region, a conformational change is induced in the protein which traps the proteinase. The entrapped enzyme remains active against low molecular weight substrates (activity against high molecular weight substrates is greatly reduced). Following cleavage in the bait region a thioester bond is hydrolyzed and mediates the covalent binding of the protein to the proteinase. The chain is Alpha-1-macroglobulin from Rattus norvegicus (Rat).